The chain runs to 247 residues: UPF0246 protein LAF_1150 (247 aa).

This sequence belongs to the UPF0246 family.

The chain is UPF0246 protein LAF_1150 from Limosilactobacillus fermentum (strain NBRC 3956 / LMG 18251) (Lactobacillus fermentum).